A 61-amino-acid polypeptide reads, in one-letter code: UPF0434 protein Avin_14770 (61 aa).

This sequence belongs to the UPF0434 family.

The protein is UPF0434 protein Avin_14770 of Azotobacter vinelandii (strain DJ / ATCC BAA-1303).